The sequence spans 196 residues: uncharacterized protein (196 aa).

This is an uncharacterized protein from Mycoplasma pneumoniae (strain ATCC 29342 / M129 / Subtype 1) (Mycoplasmoides pneumoniae).